A 452-amino-acid polypeptide reads, in one-letter code: Cytoplasmic tRNA 2-thiolation protein 2 (452 aa).

This sequence belongs to the CTU2/NCS2 family.

It is found in the cytoplasm. It functions in the pathway tRNA modification; 5-methoxycarbonylmethyl-2-thiouridine-tRNA biosynthesis. Its function is as follows. Plays a central role in 2-thiolation of mcm(5)S(2)U at tRNA wobble positions of tRNA(Lys), tRNA(Glu) and tRNA(Gln). May act by forming a heterodimer with NCS6 that ligates sulfur from thiocarboxylated URM1 onto the uridine of tRNAs at wobble position. Prior mcm(5) tRNA modification by the elongator complex is required for 2-thiolation. May also be involved in protein urmylation. In Candida albicans (strain SC5314 / ATCC MYA-2876) (Yeast), this protein is Cytoplasmic tRNA 2-thiolation protein 2.